The sequence spans 86 residues: Neurotoxin 3FTx-8a (86 aa).

The signal sequence occupies residues 1 to 21 (MKTLLLTLVVVTIVCLDLGYT). Cystine bridges form between C24–C45, C27–C32, C38–C63, C67–C78, and C79–C84.

Expressed by the venom gland.

The protein resides in the secreted. Its function is as follows. Binds with low affinity to muscular (alpha-1-beta-1-delta-epsilon/CHRNA1-CHRNB1-CHRND-CHRNE) and very low affinity to neuronal (alpha-7/CHRNA7) nicotinic acetylcholine receptor (nAChR). This is Neurotoxin 3FTx-8a from Bungarus fasciatus (Banded krait).